Reading from the N-terminus, the 677-residue chain is Envelope glycoprotein (677 aa).

The N-terminal stretch at M1–S33 is a signal peptide. Topologically, residues M34 to Q651 are extracellular. Residue N41 is glycosylated (N-linked (GlcNAc...) asparagine; by host). Cystine bridges form between C54–C610, C109–C136, C122–C148, C512–C557, and C602–C609. The tract at residues R55–E202 is receptor-binding. N-linked (GlcNAc...) asparagine; by host glycans are attached at residues N205, N239, N258, N269, N297, N317, N318, N339, N406, N420, N435, and N463. Residues N306 to T486 form a mucin-like region region. Residues H315–G326 show a composition bias toward polar residues. 3 disordered regions span residues H315–P349, N370–F482, and K489–T508. 2 stretches are compositionally biased toward polar residues: residues N370–E421 and N429–G472. A fusion peptide region spans residues G525–A540. Residues L555–Q596 are a coiled coil. N564 carries N-linked (GlcNAc...) asparagine; by host glycosylation. A coiled-coil region spans residues W616–P635. N619 is a glycosylation site (N-linked (GlcNAc...) asparagine; by host). Residues W652 to I672 form a helical membrane-spanning segment. S-palmitoyl cysteine; by host attachment occurs at residues C671 and C673. Residues C673–C677 lie on the Cytoplasmic side of the membrane.

The protein belongs to the filoviruses glycoprotein family. In terms of assembly, homotrimer; each monomer consists of a GP1 and a GP2 subunit linked by disulfide bonds. The resulting peplomers (GP1,2) protrude from the virus surface as spikes. Interacts with host integrin alpha-V/ITGAV. Interacts with host CLEC10A. Binds also to host CD209 and CLEC4M/DC-SIGN(R). Interacts with host FOLR1. Interacts with BST2; this interaction inhibits the antiviral effect of BST2 and this allows viral release from infected cells. Interacts with host FCN1; this interaction enhances viral entry. Interacts with host TLR4; this interaction induces cell death in T-lymphocytes or proinflammatory cytokines and SOCS1 production in monocytes. Interacts with host entry receptor NPC1. As to quaternary structure, GP1 and GP2delta are part of GP1,2delta soluble complexes released by ectodomain shedding. The signal peptide region modulates GP's high mannose glycosylation, thereby determining the efficiency of the interactions with DC-SIGN(R). In terms of processing, N-glycosylated. Post-translationally, O-glycosylated in the mucin-like region. Palmitoylation of GP2 is not required for its function. In terms of processing, specific enzymatic cleavages in vivo yield mature proteins. The precursor is processed into GP1 and GP2 by host cell furin in the trans Golgi, and maybe by other host proteases, to yield the mature GP1 and GP2 proteins. The cleavage site corresponds to the furin optimal cleavage sequence [KR]-X-[KR]-R. This cleavage does not seem to be required for function. After the internalization of the virus into cell endosomes, GP1 C-terminus is removed by the endosomal proteases cathepsin B, cathepsin L, or both, leaving a 19-kDa N-terminal fragment which is further digested by cathepsin B. Proteolytic processing of GP1,2 by host ADAM17 can remove the transmembrane anchor of GP2 and leads to shedding of complexes consisting in GP1 and truncated GP2 (GP1,2delta).

It is found in the virion membrane. It localises to the host cell membrane. The protein localises to the secreted. Trimeric GP1,2 complexes form the virion surface spikes and mediate the viral entry processes, with GP1 acting as the receptor-binding subunit and GP2 as the membrane fusion subunit. At later times of infection, down-regulates the expression of various host cell surface molecules that are essential for immune surveillance and cell adhesion. Down-modulates several integrins including ITGA1, ITGA2, ITGA3, ITGA4, ITGA5, ITGA6, ITGAV and ITGB1. This decrease in cell adhesion molecules may lead to cell detachment, contributing to the disruption of blood vessel integrity and hemorrhages developed during infection (cytotoxicity). Interacts with host TLR4 and thereby stimulates the differentiation and activation of monocytes leading to bystander death of T-lymphocytes. Down-regulates as well the function of host natural killer cells. Counteracts the antiviral effect of host BST2/tetherin that restricts release of progeny virions from infected cells. However, cooperates with VP40 and host BST2 to activate canonical NF-kappa-B pathway in a manner dependent on neddylation. Functionally, functions as a decoy for anti-GP1,2 antibodies thereby contributing to viral immune evasion. Interacts and activates host macrophages and dendritic cells inducing up-regulation of cytokine transcription. This effect is mediated throught activation of host TLR4. In terms of biological role, responsible for binding to the receptor(s) on target cells. Interacts with CD209/DC-SIGN and CLEC4M/DC-SIGNR which act as cofactors for virus entry into dendritic cells (DCs) and endothelial cells. Binding to the macrophage specific lectin CLEC10A also seems to enhance virus infectivity. Interaction with FOLR1/folate receptor alpha may be a cofactor for virus entry in some cell types, although results are contradictory. Members of the Tyro3 receptor tyrosine kinase family also seem to be cell entry factors in filovirus infection. Once attached, the virions are internalized through clathrin-dependent endocytosis and/or macropinocytosis. After internalization of the virus into the endosomes of the host cell, proteolysis of GP1 by two cysteine proteases, CTSB/cathepsin B and CTSL/cathepsin L removes the glycan cap and allows GP1 binding to the host entry receptor NPC1. NPC1-binding, Ca(2+) and acidic pH induce a conformational change of GP2, which unmasks its fusion peptide and permit membranes fusion. Its function is as follows. Acts as a class I viral fusion protein. Under the current model, the protein has at least 3 conformational states: pre-fusion native state, pre-hairpin intermediate state, and post-fusion hairpin state. During viral and target cell membrane fusion, the coiled coil regions (heptad repeats) assume a trimer-of-hairpins structure, positioning the fusion peptide in close proximity to the C-terminal region of the ectodomain. The formation of this structure appears to drive apposition and subsequent fusion of viral and target cell membranes. Responsible for penetration of the virus into the cell cytoplasm by mediating the fusion of the membrane of the endocytosed virus particle with the endosomal membrane. Low pH in endosomes induces an irreversible conformational change in GP2, releasing the fusion hydrophobic peptide. The chain is Envelope glycoprotein (GP) from Homo sapiens (Human).